The chain runs to 305 residues: Homoserine O-acetyltransferase (305 aa).

The active-site Acyl-thioester intermediate is the cysteine 142. Substrate contacts are provided by lysine 163 and serine 192. The Proton acceptor role is filled by histidine 235. Residue glutamate 237 is part of the active site. Residue arginine 249 participates in substrate binding.

Belongs to the MetA family.

The protein localises to the cytoplasm. It carries out the reaction L-homoserine + acetyl-CoA = O-acetyl-L-homoserine + CoA. It functions in the pathway amino-acid biosynthesis; L-methionine biosynthesis via de novo pathway; O-acetyl-L-homoserine from L-homoserine: step 1/1. In terms of biological role, transfers an acetyl group from acetyl-CoA to L-homoserine, forming acetyl-L-homoserine. The protein is Homoserine O-acetyltransferase of Cereibacter sphaeroides (strain ATCC 17025 / ATH 2.4.3) (Rhodobacter sphaeroides).